The chain runs to 382 residues: 1-deoxy-D-xylulose 5-phosphate reductoisomerase (382 aa).

Positions 10, 11, 12, 13, 38, and 120 each coordinate NADPH. Lysine 121 provides a ligand contact to 1-deoxy-D-xylulose 5-phosphate. Glutamate 122 is a binding site for NADPH. Aspartate 146 provides a ligand contact to Mn(2+). 1-deoxy-D-xylulose 5-phosphate contacts are provided by serine 147, glutamate 148, serine 172, and histidine 195. Glutamate 148 is a Mn(2+) binding site. Glycine 201 provides a ligand contact to NADPH. Positions 208, 213, 214, and 217 each coordinate 1-deoxy-D-xylulose 5-phosphate. Glutamate 217 is a Mn(2+) binding site.

This sequence belongs to the DXR family. Requires Mg(2+) as cofactor. The cofactor is Mn(2+).

The enzyme catalyses 2-C-methyl-D-erythritol 4-phosphate + NADP(+) = 1-deoxy-D-xylulose 5-phosphate + NADPH + H(+). Its pathway is isoprenoid biosynthesis; isopentenyl diphosphate biosynthesis via DXP pathway; isopentenyl diphosphate from 1-deoxy-D-xylulose 5-phosphate: step 1/6. Its function is as follows. Catalyzes the NADPH-dependent rearrangement and reduction of 1-deoxy-D-xylulose-5-phosphate (DXP) to 2-C-methyl-D-erythritol 4-phosphate (MEP). In Caldanaerobacter subterraneus subsp. tengcongensis (strain DSM 15242 / JCM 11007 / NBRC 100824 / MB4) (Thermoanaerobacter tengcongensis), this protein is 1-deoxy-D-xylulose 5-phosphate reductoisomerase.